The sequence spans 144 residues: Large ribosomal subunit protein uL11 (144 aa).

Belongs to the universal ribosomal protein uL11 family. In terms of assembly, part of the ribosomal stalk of the 50S ribosomal subunit. Interacts with L10 and the large rRNA to form the base of the stalk. L10 forms an elongated spine to which L12 dimers bind in a sequential fashion forming a multimeric L10(L12)X complex. Post-translationally, one or more lysine residues are methylated.

Forms part of the ribosomal stalk which helps the ribosome interact with GTP-bound translation factors. The protein is Large ribosomal subunit protein uL11 of Streptomyces coelicolor (strain ATCC BAA-471 / A3(2) / M145).